A 160-amino-acid polypeptide reads, in one-letter code: Transcription elongation factor GreA (160 aa).

A coiled-coil region spans residues 43–76; it reads LSENAEYDAAREQQRQLENKIGDLESKLTRATIL.

The protein belongs to the GreA/GreB family.

In terms of biological role, necessary for efficient RNA polymerase transcription elongation past template-encoded arresting sites. The arresting sites in DNA have the property of trapping a certain fraction of elongating RNA polymerases that pass through, resulting in locked ternary complexes. Cleavage of the nascent transcript by cleavage factors such as GreA or GreB allows the resumption of elongation from the new 3'terminus. GreA releases sequences of 2 to 3 nucleotides. The polypeptide is Transcription elongation factor GreA (Chlorobium phaeobacteroides (strain BS1)).